The sequence spans 28 residues: Trypsin inhibitor 4 (28 aa).

Cystine bridges form between C2-C19, C9-C21, and C15-C27.

Belongs to the protease inhibitor I7 (squash-type serine protease inhibitor) family.

Its subcellular location is the secreted. Inhibits trypsin. The sequence is that of Trypsin inhibitor 4 from Luffa aegyptiaca (Sponge gourd).